Here is a 393-residue protein sequence, read N- to C-terminus: Lipid-A-disaccharide synthase (393 aa).

Belongs to the LpxB family.

It catalyses the reaction a lipid X + a UDP-2-N,3-O-bis[(3R)-3-hydroxyacyl]-alpha-D-glucosamine = a lipid A disaccharide + UDP + H(+). Its pathway is bacterial outer membrane biogenesis; LPS lipid A biosynthesis. Its function is as follows. Condensation of UDP-2,3-diacylglucosamine and 2,3-diacylglucosamine-1-phosphate to form lipid A disaccharide, a precursor of lipid A, a phosphorylated glycolipid that anchors the lipopolysaccharide to the outer membrane of the cell. This is Lipid-A-disaccharide synthase from Rhodopseudomonas palustris (strain HaA2).